The following is a 155-amino-acid chain: uncharacterized protein (155 aa).

The N-terminal 17 residues, 1–17 (MMRGASKRSISSAAVLL), are a transit peptide targeting the mitochondrion. The disordered stretch occupies residues 111-155 (WHRQQKRSQRRRSVAKYEQREEAARVEKEEREARDREMVRELFRR). A compositionally biased stretch (basic residues) spans 113 to 124 (RQQKRSQRRRSV). A compositionally biased stretch (basic and acidic residues) spans 125–155 (AKYEQREEAARVEKEEREARDREMVRELFRR).

It belongs to the prokaryotic/mitochondrial release factor family.

The protein localises to the mitochondrion. This is an uncharacterized protein from Saccharomyces cerevisiae (strain ATCC 204508 / S288c) (Baker's yeast).